A 164-amino-acid polypeptide reads, in one-letter code: FMN reductase (NADH) RutF (164 aa).

It belongs to the non-flavoprotein flavin reductase family. RutF subfamily.

The catalysed reaction is FMNH2 + NAD(+) = FMN + NADH + 2 H(+). Its function is as follows. Catalyzes the reduction of FMN to FMNH2 which is used to reduce pyrimidine by RutA via the Rut pathway. This chain is FMN reductase (NADH) RutF, found in Shigella flexneri serotype X (strain 2002017).